Here is an 844-residue protein sequence, read N- to C-terminus: Fe(2+) transport protein A/Fe(2+) transporter FeoB fusion protein (844 aa).

The feoA stretch occupies residues 1–73 (MRLSELHTGD…EDAAKIEVEL (73 aa)). Residues 74–844 (ISSNATSSPA…LIYRIGILFF (771 aa)) are feoB. Polar residues predominate over residues 79 to 106 (TSSPASNDIGEQSANPDSNESIPTNPTE). Positions 79–110 (TSSPASNDIGEQSANPDSNESIPTNPTEDISA) are disordered. Residues 126 to 289 (VIRVALIGNP…FDTLISIHEG (164 aa)) enclose the FeoB-type G domain. GTP is bound by residues 133–140 (GNPNCGKT), 158–162 (GVTVE), 179–182 (DLPG), 240–243 (NMFD), and 269–271 (VGR). A run of 8 helical transmembrane segments spans residues 418–438 (VLGFPLFLLFMFIMFEATFVL), 475–495 (IGGVGGVIVFLPNILILYFFI), 520–540 (LHGKSFIPLIMGFGCNVPAIM), 559–579 (PLMSCSARLPVYLLLAGAFFP), 581–601 (SAGLVLFGLYFLGILLAVLLA), 646–666 (MGSIILLASIVIWFLSYYPRY), 786–806 (IIALALMAFVLIYFPCIATVV), and 817–837 (WAVFSIIYSCSLAWIVSFLIY).

The protein in the N-terminal section; belongs to the FeoA family. In the C-terminal section; belongs to the TRAFAC class TrmE-Era-EngA-EngB-Septin-like GTPase superfamily. FeoB GTPase (TC 9.A.8) family.

The protein localises to the cell inner membrane. Probable transporter of a GTP-driven Fe(2+) uptake system. In Porphyromonas gingivalis (strain ATCC BAA-308 / W83), this protein is Fe(2+) transport protein A/Fe(2+) transporter FeoB fusion protein.